The primary structure comprises 111 residues: Photosystem II reaction center Psb28 protein (111 aa).

The protein belongs to the Psb28 family. Part of the photosystem II complex.

It is found in the cellular thylakoid membrane. This is Photosystem II reaction center Psb28 protein from Trichormus variabilis (strain ATCC 29413 / PCC 7937) (Anabaena variabilis).